The primary structure comprises 468 residues: Probable Xaa-Pro aminopeptidase PEPP (468 aa).

Residues aspartate 264, aspartate 275, glutamate 398, and glutamate 438 each contribute to the Mn(2+) site.

The protein belongs to the peptidase M24B family. Mn(2+) is required as a cofactor.

It catalyses the reaction Release of any N-terminal amino acid, including proline, that is linked to proline, even from a dipeptide or tripeptide.. Its function is as follows. Catalyzes the removal of a penultimate prolyl residue from the N-termini of peptides. The polypeptide is Probable Xaa-Pro aminopeptidase PEPP (PEPP) (Paracoccidioides brasiliensis (strain Pb03)).